The chain runs to 388 residues: P2X purinoceptor 4 (388 aa).

Residues 1-33 lie on the Cytoplasmic side of the membrane; sequence MAGCCAALAAFLFEYDTPRIVLIRSRKVGLMNR. A helical membrane pass occupies residues 34–54; it reads AVQLLILAYVIGWVFVWEKGY. At 55-338 the chain is on the extracellular side; that stretch reads QETDSVVSSV…KFDIIPTMIN (284 aa). K67 and K69 together coordinate ATP. Positions 67 and 69 each coordinate CTP. Residues N75 and N110 are each glycosylated (N-linked (GlcNAc...) asparagine). Intrachain disulfides connect C116–C165, C126–C149, and C132–C159. N-linked (GlcNAc...) asparagine glycosylation is found at N153 and N184. ATP-binding residues include T186 and L188. T186 provides a ligand contact to CTP. N199 and N208 each carry an N-linked (GlcNAc...) asparagine glycan. Cystine bridges form between C217/C227 and C261/C270. Residues N293, R295, and K313 each coordinate ATP. CTP-binding residues include N293, R295, and K313. Residues 339–359 traverse the membrane as a helical segment; that stretch reads IGSGLALLGMATVLCDIIVLY. Residues 360 to 388 are Cytoplasmic-facing; it reads CMKKRLYYREKKYKYVEDYEQGLASELDQ.

It belongs to the P2X receptor family. As to quaternary structure, functional P2RXs are organized as homomeric and heteromeric trimers. Forms heterotrimer with P2RX1. Interacts with P2RX7 (via C-terminus); this interaction is functional only in the presence of ATP. Forms heterotrimer with P2RX4; functional differences between homomeric P2RX4 and P2RX4/6 heterotrimer are minor. Interacts with AP1M2.

Its subcellular location is the cell membrane. It localises to the lysosome membrane. It catalyses the reaction K(+)(in) = K(+)(out). The catalysed reaction is Na(+)(in) = Na(+)(out). It carries out the reaction Ca(2+)(in) = Ca(2+)(out). Activated by ATP. pH-dependent and inhibited by acidic pH. In terms of biological role, ATP-gated nonselective transmembrane cation channel permeable to potassium, sodium and calcium. CTP, but not GTP or UTP, functions as a weak affinity agonist for P2RX4. Activated by extracellularly released ATP, it plays multiple role in immunity and central nervous system physiology. Plays a key role in initial steps of T-cell activation and Ca(2+) microdomain formation. Also participates in basal T-cell activity without TCR/CD3 stimulation. Promotes the differentiation and activation of Th17 cells via expression of retinoic acid-related orphan receptor C/RORC. Upon activation, drives microglia motility via the PI3K/Akt pathway. Could also function as an ATP-gated cation channel of lysosomal membranes. This is P2X purinoceptor 4 (P2RX4) from Homo sapiens (Human).